Reading from the N-terminus, the 416-residue chain is Gamma-glutamyl phosphate reductase (416 aa).

It belongs to the gamma-glutamyl phosphate reductase family.

Its subcellular location is the cytoplasm. It catalyses the reaction L-glutamate 5-semialdehyde + phosphate + NADP(+) = L-glutamyl 5-phosphate + NADPH + H(+). The protein operates within amino-acid biosynthesis; L-proline biosynthesis; L-glutamate 5-semialdehyde from L-glutamate: step 2/2. Its function is as follows. Catalyzes the NADPH-dependent reduction of L-glutamate 5-phosphate into L-glutamate 5-semialdehyde and phosphate. The product spontaneously undergoes cyclization to form 1-pyrroline-5-carboxylate. The chain is Gamma-glutamyl phosphate reductase from Salmonella schwarzengrund (strain CVM19633).